We begin with the raw amino-acid sequence, 62 residues long: Sperm protamine P1 (62 aa).

Residues 1-62 (MARSRRHSRS…RCSRRRRRRC (62 aa)) form a disordered region.

Belongs to the protamine P1 family. In terms of tissue distribution, testis.

Its subcellular location is the nucleus. It is found in the chromosome. Protamines substitute for histones in the chromatin of sperm during the haploid phase of spermatogenesis. They compact sperm DNA into a highly condensed, stable and inactive complex. The chain is Sperm protamine P1 (PRM1) from Planigale ingrami (Long-tailed planigale).